Consider the following 444-residue polypeptide: 3-phosphoshikimate 1-carboxyvinyltransferase (444 aa).

3-phosphoshikimate is bound by residues Lys32, Ser33, and Arg37. Lys32 serves as a coordination point for phosphoenolpyruvate. Phosphoenolpyruvate is bound by residues Gly105 and Arg133. 3-phosphoshikimate contacts are provided by Ser178, Gln180, Asp326, and Lys353. Position 180 (Gln180) interacts with phosphoenolpyruvate. The active-site Proton acceptor is the Asp326. 2 residues coordinate phosphoenolpyruvate: Arg357 and Arg398.

It belongs to the EPSP synthase family. In terms of assembly, monomer.

The protein localises to the cytoplasm. The enzyme catalyses 3-phosphoshikimate + phosphoenolpyruvate = 5-O-(1-carboxyvinyl)-3-phosphoshikimate + phosphate. It functions in the pathway metabolic intermediate biosynthesis; chorismate biosynthesis; chorismate from D-erythrose 4-phosphate and phosphoenolpyruvate: step 6/7. Functionally, catalyzes the transfer of the enolpyruvyl moiety of phosphoenolpyruvate (PEP) to the 5-hydroxyl of shikimate-3-phosphate (S3P) to produce enolpyruvyl shikimate-3-phosphate and inorganic phosphate. The polypeptide is 3-phosphoshikimate 1-carboxyvinyltransferase (Nitrosococcus oceani (strain ATCC 19707 / BCRC 17464 / JCM 30415 / NCIMB 11848 / C-107)).